The primary structure comprises 951 residues: Leucine-rich repeat-containing G-protein coupled receptor 4 (951 aa).

The signal sequence occupies residues 1-24; the sequence is MPGPLRLLCFFALGLLGSAGPSGA. In terms of domain architecture, LRRNT spans 25–57; that stretch reads APPLCAAPCSCDGDRRVDCSGKGLTAVPEGLSA. Topologically, residues 25-544 are extracellular; the sequence is APPLCAAPCS…LLGSWMIRLT (520 aa). 2 cysteine pairs are disulfide-bonded: Cys-29–Cys-35 and Cys-33–Cys-43. LRR repeat units follow at residues 58 to 79, 82 to 103, 106 to 127, 130 to 151, 154 to 177, 178 to 199, 202 to 223, 226 to 247, 249 to 270, and 273 to 294; these read FTQA…AFKS, FLEE…ALSG, ELKV…AIHG, ALQS…SFEG, QLRH…SNLP, TLQA…AFTN, SLVV…CFDG, NLET…IKAL, SLKE…AFGG, and LLRT…AFHN. Asn-68 carries N-linked (GlcNAc...) asparagine glycosylation. 2 N-linked (GlcNAc...) asparagine glycosylation sites follow: Asn-188 and Asn-199. Residues Asn-294 and Asn-314 are each glycosylated (N-linked (GlcNAc...) asparagine). LRR repeat units lie at residues 320–341, 344–365, 366–387, 390–411, and 414–435; these read HLES…LCQN, MLRT…NGCR, ALEE…TFQG, SLRI…AFAK, and TITN…GLNG. A disulfide bond links Cys-339 and Cys-364. Disulfide bonds link Cys-470–Cys-522 and Cys-471–Cys-476. An N-linked (GlcNAc...) asparagine glycan is attached at Asn-505. The chain crosses the membrane as a helical span at residues 545-565; that stretch reads VWFIFLVALLFNLLVILTVFA. Residues 566–575 lie on the Cytoplasmic side of the membrane; that stretch reads SCSSLPASKL. The helical transmembrane segment at 576–596 threads the bilayer; it reads FIGLISVSNLLMGIYTGILTF. Residues 597–619 lie on the Extracellular side of the membrane; sequence LDAVSWGRFAEFGIWWETGSGCK. Cys-618 and Cys-693 form a disulfide bridge. Residues 620 to 640 form a helical membrane-spanning segment; that stretch reads VAGSLAVFSSESAVFLLTLAA. Residues 641-661 lie on the Cytoplasmic side of the membrane; it reads VERSVFAKDLMKHGKSSHLRQ. A helical membrane pass occupies residues 662–682; it reads FQVAALLALLGAAVAGCFPLF. The Extracellular segment spans residues 683 to 703; sequence HGGQYSASPLCLPFPTGETPS. Residues 704 to 724 traverse the membrane as a helical segment; the sequence is LGFTVTLVLLNSLAFLLMAII. The Cytoplasmic portion of the chain corresponds to 725-756; it reads YTKLYCNLEKEDLSENSQSSVIKHVAWLIFTN. The helical transmembrane segment at 757 to 777 threads the bilayer; it reads CIFFCPVAFFSFAPLITAISI. The Extracellular segment spans residues 778 to 783; sequence SPEIMK. The chain crosses the membrane as a helical span at residues 784 to 804; that stretch reads SVTLIFFPLPACLNPVLYVFF. Topologically, residues 805 to 951 are cytoplasmic; sequence NPKFKEDWKL…YAYNLQRVRD (147 aa). Ser-920 carries the post-translational modification Phosphoserine.

It belongs to the G-protein coupled receptor 1 family.

The protein resides in the cell membrane. Functionally, receptor for R-spondins that potentiates the canonical Wnt signaling pathway and is involved in the formation of various organs. Upon binding to R-spondins (RSPO1, RSPO2, RSPO3 or RSPO4), associates with phosphorylated LRP6 and frizzled receptors that are activated by extracellular Wnt receptors, triggering the canonical Wnt signaling pathway to increase expression of target genes. In contrast to classical G-protein coupled receptors, does not activate heterotrimeric G-proteins to transduce the signal. Its function as activator of the Wnt signaling pathway is required for the development of various organs, including liver, kidney, intestine, bone, reproductive tract and eye. May also act as a receptor for norrin (NDP), such results however require additional confirmation in vivo. Required during spermatogenesis to activate the Wnt signaling pathway in peritubular myoid cells. Required for the maintenance of intestinal stem cells and Paneth cell differentiation in postnatal intestinal crypts. Acts as a regulator of bone formation and remodeling. Involved in kidney development; required for maintaining the ureteric bud in an undifferentiated state. Involved in the development of the anterior segment of the eye. Required during erythropoiesis. Also acts as a negative regulator of innate immunity by inhibiting TLR2/TLR4 associated pattern-recognition and pro-inflammatory cytokine production. Plays an important role in regulating the circadian rhythms of plasma lipids, partially through regulating the rhythmic expression of MTTP. Required for proper development of GnRH neurons (gonadotropin-releasing hormone expressing neurons) that control the release of reproductive hormones from the pituitary gland. In Rattus norvegicus (Rat), this protein is Leucine-rich repeat-containing G-protein coupled receptor 4 (Lgr4).